A 781-amino-acid chain; its full sequence is Catenin beta-1 (781 aa).

The disordered stretch occupies residues Gly34–Asp56. ARM repeat units lie at residues Asn141–Lys180, Arg225–Leu264, Glu267–Tyr306, Ser351–Asp390, Ala391–Cys429, Tyr432–Ser473, Glu479–Leu519, Pro521–Glu562, Ile584–Gln623, and Lys625–Glu664. Basic and acidic residues predominate over residues Met735–Gly745. The segment at Met735 to Leu781 is disordered.

This sequence belongs to the beta-catenin family. In terms of assembly, interacts with EP-Cadherin/CDH3. Interacts with custos; the interaction is positively regulated by Wnt stimulation. Post-translationally, phosphorylation by gsk3b promotes ubiquitination and subsequent degradation by the proteasome. Ubiquitinated when phosphorylated by gsk3b, leading to its degradation. As to expression, expressed at intercalated disks in the heart (at protein level).

Its subcellular location is the cytoplasm. The protein resides in the nucleus. The protein localises to the cell membrane. Its function is as follows. Key downstream component of the canonical Wnt signaling pathway. In the absence of Wnt, forms a complex with axin1, axin2, apc, csnk1a1 and gsk3b that promotes phosphorylation on N-terminal Ser and Thr residues and ubiquitination of ctnnb1 and its subsequent degradation by the proteasome. In the presence of Wnt ligand, ctnnb1 is not ubiquitinated and accumulates in the nucleus, where it acts as a coactivator for transcription factors of the TCF/LEF family, leading to activate Wnt responsive genes. Plays a key role in dorsoventral patterning: in prospective ventral blastomeres, its down-regulation by axin1 and axin2 leads to inhibit the Wnt signaling pathway, while in prospective dorsal blastomeres, degradation of axin results in stabilization and nuclear translocation of ctnnb1. This is Catenin beta-1 from Xenopus laevis (African clawed frog).